Reading from the N-terminus, the 202-residue chain is Small ribosomal subunit protein uS4c (202 aa).

The disordered stretch occupies residues 20-43 (GLTRKTTRRNSRPGQHGDQPRKPS). In terms of domain architecture, S4 RNA-binding spans 90 to 152 (MRLDNIVFRL…ARSKQLVENY (63 aa)).

It belongs to the universal ribosomal protein uS4 family. Part of the 30S ribosomal subunit. Contacts protein S5. The interaction surface between S4 and S5 is involved in control of translational fidelity.

The protein localises to the plastid. Its subcellular location is the chloroplast. Functionally, one of the primary rRNA binding proteins, it binds directly to 16S rRNA where it nucleates assembly of the body of the 30S subunit. In terms of biological role, with S5 and S12 plays an important role in translational accuracy. This is Small ribosomal subunit protein uS4c (rps4) from Rhodomonas salina (Cryptomonas salina).